A 264-amino-acid chain; its full sequence is MKQYLDLMRRVRAQGTPKADRTGTGTLSIFGHQMRFDLRQGFLLVTTKRCHLRSIIHELLWFLNGDTNIAYLQQNNVSIWDEWADDNGDLGPVYGRQWRAWGTSDGRQIDQLAEVVRQLKQDPDSRRIIVSAWNVGELDKMALAPCHALFQFYVANGTLSCQLYQRSCDIFLGLPFNIASYALLVHMLAQQCDLQVGDFVWTGGDTHLYSNHLQQADLQLTRDPLPLPQLLIKRRPATLFDYRFEDFELTGYDPHPAIKAPVAV.

Arginine 21 is a dUMP binding site. Histidine 51 is a (6R)-5,10-methylene-5,6,7,8-tetrahydrofolate binding site. Arginine 126–arginine 127 serves as a coordination point for dUMP. The Nucleophile role is filled by cysteine 146. DUMP contacts are provided by residues arginine 166–aspartate 169, asparagine 177, and histidine 207–tyrosine 209. Aspartate 169 lines the (6R)-5,10-methylene-5,6,7,8-tetrahydrofolate pocket. Alanine 263 is a (6R)-5,10-methylene-5,6,7,8-tetrahydrofolate binding site.

It belongs to the thymidylate synthase family. Bacterial-type ThyA subfamily. In terms of assembly, homodimer.

The protein localises to the cytoplasm. It catalyses the reaction dUMP + (6R)-5,10-methylene-5,6,7,8-tetrahydrofolate = 7,8-dihydrofolate + dTMP. The protein operates within pyrimidine metabolism; dTTP biosynthesis. Catalyzes the reductive methylation of 2'-deoxyuridine-5'-monophosphate (dUMP) to 2'-deoxythymidine-5'-monophosphate (dTMP) while utilizing 5,10-methylenetetrahydrofolate (mTHF) as the methyl donor and reductant in the reaction, yielding dihydrofolate (DHF) as a by-product. This enzymatic reaction provides an intracellular de novo source of dTMP, an essential precursor for DNA biosynthesis. This is Thymidylate synthase from Sodalis glossinidius (strain morsitans).